We begin with the raw amino-acid sequence, 327 residues long: UDP-N-acetylenolpyruvoylglucosamine reductase (327 aa).

Residues 42–223 (RTGGLAELFY…RAAMDEVALH (182 aa)) form the FAD-binding PCMH-type domain. Residue Arg188 is part of the active site. Ser237 (proton donor) is an active-site residue. Glu307 is a catalytic residue.

The protein belongs to the MurB family. Requires FAD as cofactor.

It localises to the cytoplasm. The enzyme catalyses UDP-N-acetyl-alpha-D-muramate + NADP(+) = UDP-N-acetyl-3-O-(1-carboxyvinyl)-alpha-D-glucosamine + NADPH + H(+). It functions in the pathway cell wall biogenesis; peptidoglycan biosynthesis. Cell wall formation. The protein is UDP-N-acetylenolpyruvoylglucosamine reductase of Bartonella tribocorum (strain CIP 105476 / IBS 506).